The sequence spans 426 residues: Putative glutamate--cysteine ligase 2 (426 aa).

The protein belongs to the glutamate--cysteine ligase type 2 family. YbdK subfamily.

It catalyses the reaction L-cysteine + L-glutamate + ATP = gamma-L-glutamyl-L-cysteine + ADP + phosphate + H(+). ATP-dependent carboxylate-amine ligase which exhibits weak glutamate--cysteine ligase activity. This is Putative glutamate--cysteine ligase 2 from Bradyrhizobium diazoefficiens (strain JCM 10833 / BCRC 13528 / IAM 13628 / NBRC 14792 / USDA 110).